The chain runs to 355 residues: Peptide chain release factor 1 (355 aa).

Position 233 is an N5-methylglutamine (Gln233).

Belongs to the prokaryotic/mitochondrial release factor family. In terms of processing, methylated by PrmC. Methylation increases the termination efficiency of RF1.

Its subcellular location is the cytoplasm. Its function is as follows. Peptide chain release factor 1 directs the termination of translation in response to the peptide chain termination codons UAG and UAA. The chain is Peptide chain release factor 1 from Bacillus cytotoxicus (strain DSM 22905 / CIP 110041 / 391-98 / NVH 391-98).